We begin with the raw amino-acid sequence, 183 residues long: Peptidyl-tRNA hydrolase (183 aa).

TRNA is bound at residue Tyr-15. Catalysis depends on His-20, which acts as the Proton acceptor. Residues Tyr-67 and Asn-69 each contribute to the tRNA site.

It belongs to the PTH family. Monomer.

It localises to the cytoplasm. It carries out the reaction an N-acyl-L-alpha-aminoacyl-tRNA + H2O = an N-acyl-L-amino acid + a tRNA + H(+). Functionally, hydrolyzes ribosome-free peptidyl-tRNAs (with 1 or more amino acids incorporated), which drop off the ribosome during protein synthesis, or as a result of ribosome stalling. Catalyzes the release of premature peptidyl moieties from peptidyl-tRNA molecules trapped in stalled 50S ribosomal subunits, and thus maintains levels of free tRNAs and 50S ribosomes. The polypeptide is Peptidyl-tRNA hydrolase (Chlamydia caviae (strain ATCC VR-813 / DSM 19441 / 03DC25 / GPIC) (Chlamydophila caviae)).